Here is a 418-residue protein sequence, read N- to C-terminus: Voltage-gated ClC-type chloride channel ClcB (418 aa).

Helical transmembrane passes span 5–25, 54–74, 146–166, 168–188, 222–242, 258–278, 291–311, 316–336, 352–372, and 380–400; these read LLIA…FRHA, LLTP…WQKF, LWIA…PLAG, LFIA…PVII, ALII…LTLM, WQLA…PAVW, APPL…AVLA, GAPG…GMLY, LLLG…APIM, and MTGE…ASVI.

Belongs to the chloride channel (TC 2.A.49) family. ClcB subfamily.

Its subcellular location is the cell inner membrane. In terms of biological role, probably acts as an electrical shunt for an outwardly-directed proton pump that is linked to amino acid decarboxylation, as part of the extreme acid resistance (XAR) response. The polypeptide is Voltage-gated ClC-type chloride channel ClcB (Shigella boydii serotype 18 (strain CDC 3083-94 / BS512)).